We begin with the raw amino-acid sequence, 241 residues long: MTMPFGYASPEQQVRDKSEYARKGIARGRSVVVITYADGILFVAENPSATLHKISEIYDRIAFAAVGKYNEFENLRTAGIRLMDSRGYMYDRRDVTSRALANAYAQTLGAIFTESVKPYEVEIVVAEVGPTTDDDQIYKLTFDGSIADERGFVAIGGASDQVTTSLKEHHRDGQPLADALRVAVQALTVSVPPGLPQNGERVLTAANLEVGMLDRTRARRQFKRIAGPALAELLAQTATSS.

It belongs to the peptidase T1A family. The 20S proteasome core is composed of 14 alpha and 14 beta subunits that assemble into four stacked heptameric rings, resulting in a barrel-shaped structure. The two inner rings, each composed of seven catalytic beta subunits, are sandwiched by two outer rings, each composed of seven alpha subunits. The catalytic chamber with the active sites is on the inside of the barrel. Has a gated structure, the ends of the cylinder being occluded by the N-termini of the alpha-subunits. Is capped by the proteasome-associated ATPase, ARC.

It localises to the cytoplasm. Its pathway is protein degradation; proteasomal Pup-dependent pathway. With respect to regulation, the formation of the proteasomal ATPase ARC-20S proteasome complex, likely via the docking of the C-termini of ARC into the intersubunit pockets in the alpha-rings, may trigger opening of the gate for substrate entry. Interconversion between the open-gate and close-gate conformations leads to a dynamic regulation of the 20S proteasome proteolysis activity. In terms of biological role, component of the proteasome core, a large protease complex with broad specificity involved in protein degradation. The sequence is that of Proteasome subunit alpha from Frankia alni (strain DSM 45986 / CECT 9034 / ACN14a).